A 481-amino-acid polypeptide reads, in one-letter code: (S)-N-methylcoclaurine 3'-hydroxylase isozyme 1 (481 aa).

Residue Cys423 participates in heme binding.

Belongs to the cytochrome P450 family. The cofactor is heme. As to expression, restricted to the parietal region of sieve elements adjacent or proximal to laticifers in roots, stems, leaves, carpels and hypocotyls.

The protein localises to the endoplasmic reticulum. It carries out the reaction (S)-N-methylcoclaurine + reduced [NADPH--hemoprotein reductase] + O2 = (S)-3'-hydroxy-N-methylcoclaurine + oxidized [NADPH--hemoprotein reductase] + H2O + H(+). Its pathway is alkaloid biosynthesis; (S)-reticuline biosynthesis; (S)-reticuline from (S)-norcoclaurine: step 3/4. Cytochrome P450 monooxygenase involved in the biosynthesis of benzylisoquinoline alkaloids. Catalyzes the 3'-hydroxylation of (S)-N-methylcoclaurine. The chain is (S)-N-methylcoclaurine 3'-hydroxylase isozyme 1 from Papaver somniferum (Opium poppy).